A 160-amino-acid polypeptide reads, in one-letter code: Major pollen allergen Bet v 1-F/I (160 aa).

4 residues coordinate brassinolide: lysine 55, tyrosine 82, tyrosine 84, and asparagine 101.

The protein belongs to the BetVI family.

The protein localises to the cytoplasm. In terms of biological role, may be a general steroid carrier protein. This is Major pollen allergen Bet v 1-F/I (BETV1F) from Betula pendula (European white birch).